Here is a 1264-residue protein sequence, read N- to C-terminus: MSNQQQQQLPRQLPQPHPHHHHHHHQQQPGQHSEFPLPDGWDIARDFDGKTYYIDHINKKTTWLDPRDRYTKPQSFEDCVGDELPVGWEEAYDSNIGRYYINHIAQTTQLEDPRQEWKSVQEQMLSDYLSAAQDQLENKREMYDVKQQRLNLAQEEYNHLNKLAASRSSLCSSSSSMSRHDPELLRADLMLARERVRQLKQELNHITNDISYTERGMNTLYSVGEKINARQNGCYDIAEVQAIREEMLKVHKSLVSGEKVREELMRSLVQIKNELSRQQINEENAELLSATSPFDRVCVASQTDLCGAGEHLNGGARFAEMAKTKLQYAEWRKHIKKLQQQLADHVERIEPGQLESDKDRILLIQEKEKLLNDLNSISLKSRSAEEKLVIQQTRHKLEEDLKEAYEATNTCVANRLRFHEEKQLLLAKLQEALKSTNLLEERLKSFSSESTFSISSGSSLGSLSTASSKSALSFTDIYIDPFAVGESPIDVVDLQRRSQRLFQQHQRLPPVHPAVQLQQQHQLQQQTQPQPASEVSLSPRSSLSIETPPASPMKYNAIADQPQAQAQAALKEEPTYANAMPAPPAYTAPPSVPMALAAVRTHPYDLDSTVLDCMMLEAKLQKLNLSSPLNLNGPLSPISEKPSLLDLPQEMLSRSSSTSNTRSVSAAVSNESVAGDSGVFEASRAHLPRKELAQVQIGLKYLKQEGVLVVSLERANNLSALWTATTDNSQVYLRAALLPNSLTSIRTKALGDFQKPVFNDTFAVPISLDKLLTKSLQVTVVTMTGQKEEIIGTVQISMAEFNPDDSTLKWYNVLSSKFIPTFESLDLPSTSAAAAAAAVAASNNIINNNNNNNNNNIREESSDESTITSSQTSTLTRNQAPPLELQAQIAEELPEHVRLNEQQCSDDDDDDDEEEDEQQLVGTLGLTHSGCMLDAYLENMKQEYADKETNTDCAFPPEKLRSQTQLLDDRPVKRSQTFTPSAAVSKNRYNCRLNRSDSDSAMHFGVTPHTFHRGAVERRSLRFQPKATKSVTKLHHTHIPRTSLDLELDLQAQHSKLYFLNDQISKLQNLKEVLQKACDNKDPLIAAWAIENEEFQRLVARADPTKCPEERLLQKLLMKTTKEIHKLRKTKVPKGCPDLVSFKEKMFFFTRKGMSVPELPNDFLLPDAQAIEEEEEDDDEDNVAETAIAINTALVASSNRNKNLSEHHHRSTGGAVSKLTATPTPAINPAPVATPVPATSNANEANGEQQRYDYVVDRNYGVEV.

A compositionally biased stretch (low complexity) spans 1-14 (MSNQQQQQLPRQLP). Residues 1-40 (MSNQQQQQLPRQLPQPHPHHHHHHHQQQPGQHSEFPLPDG) are disordered. A compositionally biased stretch (basic residues) spans 17–26 (HPHHHHHHHQ). WW domains lie at 35–68 (FPLP…DPRD) and 82–115 (DELP…DPRQ). 3 coiled-coil regions span residues 129 to 215 (LSAA…YTER), 258 to 288 (EKVR…AELL), and 319 to 445 (AEMA…RLKS). Over residues 513-544 (PAVQLQQQHQLQQQTQPQPASEVSLSPRSSLS) the composition is skewed to low complexity. A disordered region spans residues 513–545 (PAVQLQQQHQLQQQTQPQPASEVSLSPRSSLSI). One can recognise a C2 domain in the interval 691-811 (ELAQVQIGLK…NPDDSTLKWY (121 aa)). 2 stretches are compositionally biased toward low complexity: residues 845–856 (IINNNNNNNNNN) and 864–876 (ESTI…STLT). Disordered stretches follow at residues 845 to 880 (IINN…RNQA) and 1200 to 1254 (RNKN…RYDY).

This sequence belongs to the WWC family. KIBRA subfamily. As to quaternary structure, forms a complex with Mer and Ex. Interacts (via domain WW 1) with Ex (via RXPPXY motif). Interacts with Mer, Sav, Hpo and Wts.

It is found in the cytoplasm. Its subcellular location is the apical cell membrane. In terms of biological role, regulator of the Hippo/SWH (Sav/Wts/Hpo) signaling pathway, a signaling pathway that plays a pivotal role in organ size control and tumor suppression by restricting proliferation and promoting apoptosis. The core of this pathway is composed of a kinase cascade wherein Hippo (Hpo), in complex with its regulatory protein Salvador (Sav), phosphorylates and activates Warts (Wts) in complex with its regulatory protein Mats, which in turn phosphorylates and inactivates the Yorkie (Yki) oncoprotein. Kibra acts synergistically along with Ex and Mer to regulate the Hippo signaling pathway. This chain is Protein kibra (Kibra), found in Drosophila mojavensis (Fruit fly).